A 646-amino-acid polypeptide reads, in one-letter code: MSDIPSGALEADESRAVSLLSRVILPRPGEPLDVRKLYIEESTTNSRRAHAPTRTSLEIGPESEVSFATYFNAFPASYWRRWSTLDTVVLRVELTGTARVDVYRSKATGARITVGGAPVAGEGDGPAAVEFEIDLTPFEDGGWIWFDITTNTAVRVHSAGWYAPVPAPGRANVAVGIPTFNRPADCVNALAALTSDPLVDEVISAVIVSDQGTSKAKDHPGFADAAARLGDRLSIHNQPNLGGSGGYSRVMYEALKNTDCEQILFMDDDIRIEPDSILRALAMNRFAKSPILVGGQMLNLQEPSHLHVMGEVVDRANFMWTAAPNAEYDHDFAKFKLSDAEEPRTKLLHRRVDVDFNGWWMCMIPRQIAEELGQPLPLFIKWDDAEYGLRAGEHGYGTVTLPGAAIWHMAWSDKDDAIDWQAYFHLRNRLVVAALHWDGPVSGLIASHLKATIKHLLCLEYSTVAIQNKAMEDFLAGPENLFSILESAMPDVRKLRSQYPDAVVLPGATSLPPASDMRRKKIAIPVSKPAIAVNLARGVVHQLRSHDPETHVRPQINVATQDARWFSLCRVDGVTVTTADGRGVVYRQRDRAKMFALLRASLRQQARLARKFDRMRKVYRDALPMLTSTQKWESVLLTETPEKVGR.

4 residues coordinate UDP-alpha-D-galactofuranose: arginine 182, glutamine 211, asparagine 240, and aspartate 267. 2 residues coordinate Mn(2+): aspartate 267 and aspartate 269. The active-site Proton acceptor is aspartate 384. Residue histidine 408 participates in Mn(2+) binding.

Belongs to the glycosyltransferase 2 family. In terms of assembly, homotetramer. Mn(2+) is required as a cofactor. The cofactor is Mg(2+).

Its subcellular location is the cell membrane. It carries out the reaction beta-D-galactofuranosyl-(1-&gt;5)-beta-D-galactofuranosyl-(1-&gt;4)-alpha-L-rhamnosyl-(1-&gt;3)-N-acetyl-alpha-D-glucosaminyl-diphospho-trans,octa-cis-decaprenol + 28 UDP-alpha-D-galactofuranose = [beta-D-galactofuranosyl-(1-&gt;5)-beta-D-galactofuranosyl-(1-&gt;6)]14-beta-D-galactofuranosyl-(1-&gt;5)-beta-D-galactofuranosyl-(1-&gt;4)-alpha-L-rhamnopyranosyl-(1-&gt;3)-N-acetyl-alpha-D-glucosaminyl-diphospho-trans,octa-cis-decaprenol + 28 UDP + 28 H(+). The protein operates within cell wall biogenesis; cell wall polysaccharide biosynthesis. Functionally, involved in the galactan polymerization of the arabinogalactan (AG) region of the mycolylarabinogalactan-peptidoglycan (mAGP) complex, an essential component of the mycobacteria cell wall. Thus, successively transfers approximately 28 galactofuranosyl (Galf) residues from UDP-galactofuranose (UDP-Galf) onto the galactofuranosyl-galactofuranosyl-rhamnosyl-GlcNAc-diphospho-decaprenol (Galf-Galf-Rha-GlcNAc-PP-C50) acceptor produced by GlfT1, with alternating 1-&gt;5 and 1-&gt;6 links, forming a galactan domain with approximately 30 galactofuranosyl residues. This Mycolicibacterium smegmatis (strain ATCC 700084 / mc(2)155) (Mycobacterium smegmatis) protein is Galactofuranosyltransferase GlfT2.